We begin with the raw amino-acid sequence, 263 residues long: Fructose-bisphosphate aldolase class 1 (263 aa).

Residue lysine 177 is the Schiff-base intermediate with dihydroxyacetone-P of the active site.

This sequence belongs to the DeoC/FbaB aldolase family.

It carries out the reaction beta-D-fructose 1,6-bisphosphate = D-glyceraldehyde 3-phosphate + dihydroxyacetone phosphate. Its function is as follows. Has aldolase activity with fructose 1,6-bisphosphate. May play a role in the biosynthesis of aromatic amino acids (AroAA). This is Fructose-bisphosphate aldolase class 1 (fba1) from Halobacterium salinarum (strain ATCC 29341 / DSM 671 / R1).